The chain runs to 717 residues: Glutamine--fructose-6-phosphate aminotransferase [isomerizing] (717 aa).

Cys-2 (for GATase activity) is an active-site residue. The region spanning 2–318 (CGIFGYCNYL…DDDLAHIYDG (317 aa)) is the Glutamine amidotransferase type-2 domain. Position 253 is a phosphoserine (Ser-253). A Phosphothreonine modification is found at Thr-334. The residue at position 336 (Ser-336) is a Phosphoserine. 2 consecutive SIS domains span residues 390-529 (WLPV…DRVS) and 562-707 (CATE…VDFP).

The catalysed reaction is D-fructose 6-phosphate + L-glutamine = D-glucosamine 6-phosphate + L-glutamate. The protein operates within nucleotide-sugar biosynthesis; UDP-N-acetyl-alpha-D-glucosamine biosynthesis; alpha-D-glucosamine 6-phosphate from D-fructose 6-phosphate: step 1/1. Its function is as follows. Involved in amino sugar synthesis (formation of chitin, supplies the amino sugars of asparagine-linked oligosaccharides of glycoproteins). This Saccharomyces cerevisiae (strain ATCC 204508 / S288c) (Baker's yeast) protein is Glutamine--fructose-6-phosphate aminotransferase [isomerizing] (GFA1).